We begin with the raw amino-acid sequence, 405 residues long: Potassium channel subfamily K member 18 (405 aa).

A helical transmembrane segment spans residues 43–63 (LPGLCFLCCLVTYALVGAALF). A glycan (N-linked (GlcNAc...) asparagine) is linked at Asn94. Residues 125 to 151 (FLSALFFCCTVFSTVGYGHMYPVTRLG) constitute an intramembrane region (pore-forming). The K(+) site is built by Thr138, Val139, Gly140, and Tyr141. The selectivity filter 1 stretch occupies residues 138–143 (TVGYGH). A helical membrane pass occupies residues 153 to 173 (FLCMLYALFGIPLMFLVLTDI). Positions 221 to 226 (PQIVID) are interaction with calcineurin. The interaction with YWHAH stretch occupies residues 272-277 (RSNSCP). 2 positions are modified to phosphoserine: Ser275 and Ser287. Residues 304–324 (IPLPVIALVIFAYISCAAAIL) form a helical membrane-spanning segment. Residues 337–351 (FYFCFVTLTTIGFGD) constitute an intramembrane region (pore-forming). A selectivity filter 2 region spans residues 346–351 (TIGFGD). Residues 358 to 378 (HFFLFFSIYIIVGMEILFIAF) traverse the membrane as a helical segment.

It belongs to the two pore domain potassium channel (TC 1.A.1.8) family. In terms of assembly, homodimer. Heterodimer with KCNK2. Heterodimer with KCNK10. Interacts with calcineurin. Interacts with YWHAH, in a phosphorylation-dependent manner. Post-translationally, phosphorylation of Ser-275 is required for the binding of 14-3-3eta/YWHAH. Calcineurin-mediated dephosphorylation of Ser-287 enhances channel activity. N-glycosylated.

Its subcellular location is the cell membrane. It catalyses the reaction K(+)(in) = K(+)(out). With respect to regulation, activated by volatile anesthetics, such as isoflurane and inhibited by local anesthetics such as bupivacaine and lidocaine. Inhibited by extracellular acidic pH. Inhibited by Zn(2+) ions. Its function is as follows. K(+) channel that conducts outward and inward rectifying currents at depolarized and hyperpolarized membrane potentials, respectively. The outward rectifying currents are voltage-dependent, coupled to K(+) electrochemical gradient across the membrane, whereas the inward currents can be induced in response to activation of Ca(2+)-mobilizing receptors. Homo- and heterodimerizes to form functional channels with distinct regulatory and gating properties. In trigeminal ganglia sensory neurons, the heterodimers of KCNK18/TRESK and KCNK2/TREK-1 or KCNK10/TREK-2 inhibit neuronal firing and neurogenic inflammation by stabilizing the resting membrane potential at K(+) equilibrium potential as well as by regulating the threshold of action potentials and the spike frequency. In thymocytes, conducts K(+) currents upon T cell receptor (TCR) signaling leading to sustained Ca(2+) influx and NF-kappa-B activation, FOXP3 transcription and positive selection of regulatory T cell (Treg) progenitor subsets. Appears to mediate the analgesics effects of hydroxy-alpha-sanshool, a metabolite naturally present in Schezuan pepper and other Xanthoxylum plants. The sequence is that of Potassium channel subfamily K member 18 (Kcnk18) from Rattus norvegicus (Rat).